Here is a 247-residue protein sequence, read N- to C-terminus: Ribosomal RNA small subunit methyltransferase G (247 aa).

Residues G84, F89, 136–137 (AE), and R155 each bind S-adenosyl-L-methionine.

It belongs to the methyltransferase superfamily. RNA methyltransferase RsmG family.

The protein localises to the cytoplasm. In terms of biological role, specifically methylates the N7 position of a guanine in 16S rRNA. The polypeptide is Ribosomal RNA small subunit methyltransferase G (Prochlorococcus marinus (strain MIT 9303)).